Consider the following 231-residue polypeptide: DNA mismatch repair protein MutH (231 aa).

This sequence belongs to the MutH family.

The protein localises to the cytoplasm. Sequence-specific endonuclease that cleaves unmethylated GATC sequences. It is involved in DNA mismatch repair. The sequence is that of DNA mismatch repair protein MutH from Salmonella paratyphi C (strain RKS4594).